We begin with the raw amino-acid sequence, 203 residues long: ATP-dependent Clp protease proteolytic subunit (203 aa).

The Nucleophile role is filled by serine 107. The active site involves histidine 132.

The protein belongs to the peptidase S14 family. As to quaternary structure, fourteen ClpP subunits assemble into 2 heptameric rings which stack back to back to give a disk-like structure with a central cavity, resembling the structure of eukaryotic proteasomes.

The protein resides in the cytoplasm. The enzyme catalyses Hydrolysis of proteins to small peptides in the presence of ATP and magnesium. alpha-casein is the usual test substrate. In the absence of ATP, only oligopeptides shorter than five residues are hydrolyzed (such as succinyl-Leu-Tyr-|-NHMec, and Leu-Tyr-Leu-|-Tyr-Trp, in which cleavage of the -Tyr-|-Leu- and -Tyr-|-Trp bonds also occurs).. Cleaves peptides in various proteins in a process that requires ATP hydrolysis. Has a chymotrypsin-like activity. Plays a major role in the degradation of misfolded proteins. This is ATP-dependent Clp protease proteolytic subunit from Shewanella piezotolerans (strain WP3 / JCM 13877).